The chain runs to 566 residues: Proline--tRNA ligase (566 aa).

This sequence belongs to the class-II aminoacyl-tRNA synthetase family. ProS type 1 subfamily. In terms of assembly, homodimer.

Its subcellular location is the cytoplasm. It carries out the reaction tRNA(Pro) + L-proline + ATP = L-prolyl-tRNA(Pro) + AMP + diphosphate. Catalyzes the attachment of proline to tRNA(Pro) in a two-step reaction: proline is first activated by ATP to form Pro-AMP and then transferred to the acceptor end of tRNA(Pro). As ProRS can inadvertently accommodate and process non-cognate amino acids such as alanine and cysteine, to avoid such errors it has two additional distinct editing activities against alanine. One activity is designated as 'pretransfer' editing and involves the tRNA(Pro)-independent hydrolysis of activated Ala-AMP. The other activity is designated 'posttransfer' editing and involves deacylation of mischarged Ala-tRNA(Pro). The misacylated Cys-tRNA(Pro) is not edited by ProRS. This Staphylococcus saprophyticus subsp. saprophyticus (strain ATCC 15305 / DSM 20229 / NCIMB 8711 / NCTC 7292 / S-41) protein is Proline--tRNA ligase.